The following is a 719-amino-acid chain: DNA ligase (719 aa).

Residues 42–46 (DAEYD), 91–92 (SL), and glutamate 125 contribute to the NAD(+) site. The active-site N6-AMP-lysine intermediate is the lysine 127. NAD(+) is bound by residues arginine 148, glutamate 184, lysine 300, and lysine 324. Residues cysteine 429, cysteine 432, cysteine 447, and cysteine 453 each contribute to the Zn(2+) site. A BRCT domain is found at 638–719 (TASSPIAEKI…WMRLIKGHNI (82 aa)).

This sequence belongs to the NAD-dependent DNA ligase family. LigA subfamily. Mg(2+) is required as a cofactor. It depends on Mn(2+) as a cofactor.

It catalyses the reaction NAD(+) + (deoxyribonucleotide)n-3'-hydroxyl + 5'-phospho-(deoxyribonucleotide)m = (deoxyribonucleotide)n+m + AMP + beta-nicotinamide D-nucleotide.. Its function is as follows. DNA ligase that catalyzes the formation of phosphodiester linkages between 5'-phosphoryl and 3'-hydroxyl groups in double-stranded DNA using NAD as a coenzyme and as the energy source for the reaction. It is essential for DNA replication and repair of damaged DNA. The sequence is that of DNA ligase from Bartonella tribocorum (strain CIP 105476 / IBS 506).